We begin with the raw amino-acid sequence, 357 residues long: tRNA/tmRNA (uracil-C(5))-methyltransferase (357 aa).

5 residues coordinate S-adenosyl-L-methionine: Q180, Y209, N214, E230, and D290. The active-site Nucleophile is the C315. E349 functions as the Proton acceptor in the catalytic mechanism.

This sequence belongs to the class I-like SAM-binding methyltransferase superfamily. RNA M5U methyltransferase family. TrmA subfamily.

The enzyme catalyses uridine(54) in tRNA + S-adenosyl-L-methionine = 5-methyluridine(54) in tRNA + S-adenosyl-L-homocysteine + H(+). It catalyses the reaction uridine(341) in tmRNA + S-adenosyl-L-methionine = 5-methyluridine(341) in tmRNA + S-adenosyl-L-homocysteine + H(+). Its function is as follows. Dual-specificity methyltransferase that catalyzes the formation of 5-methyluridine at position 54 (m5U54) in all tRNAs, and that of position 341 (m5U341) in tmRNA (transfer-mRNA). The protein is tRNA/tmRNA (uracil-C(5))-methyltransferase of Campylobacter jejuni subsp. jejuni serotype O:23/36 (strain 81-176).